The sequence spans 93 residues: UPF0728 protein C10orf53 homolog (93 aa).

The protein belongs to the UPF0728 family.

This Bos taurus (Bovine) protein is UPF0728 protein C10orf53 homolog.